A 448-amino-acid chain; its full sequence is MLDPILLRKDLQTVVSRLKTRGVDFDTQRFNELEARRKAVQTETESLQARRNALAKQIGQLKAQGQDASAVLAESQAIPARLKQLEDDLAVVQQSLGDLLMAVPNLPHESVPAGASADDNVEVRRWLPGPPAADGNPPPLPFEPKDHVALGEPLGLDFDTAAKLSGARFSFMRGPVARLHRALAQFMLDLQTGQHGYTECYTPYIVNSSTLYGTGQLPKFKDDMFFVTKGGEDDDPKVDERGNALAREDQYLISTSEITLTSVARDSIIPAANLPLRLTAHTPCFRSEAGSGGRDTRGMIRQHQFDKVEMVQIVHPETSYQVLEDMVGHAEHVLQLLELPYRVVLLCTGDMGFGSAKTYDLEVWLPAQNTWREISSVSNCETFQARRMQARFRAAQGKPDYVHTLNGSGLAVGRALVAVLENHQQADGSIAVPKVLQPYMGGLTVLQP.

255-257 (TSE) contributes to the L-serine binding site. ATP is bound at residue 286–288 (RSE). Glutamate 309 provides a ligand contact to L-serine. Position 373-376 (373-376 (EISS)) interacts with ATP. Serine 408 contributes to the L-serine binding site.

The protein belongs to the class-II aminoacyl-tRNA synthetase family. Type-1 seryl-tRNA synthetase subfamily. As to quaternary structure, homodimer. The tRNA molecule binds across the dimer.

It localises to the cytoplasm. The enzyme catalyses tRNA(Ser) + L-serine + ATP = L-seryl-tRNA(Ser) + AMP + diphosphate + H(+). It carries out the reaction tRNA(Sec) + L-serine + ATP = L-seryl-tRNA(Sec) + AMP + diphosphate + H(+). It functions in the pathway aminoacyl-tRNA biosynthesis; selenocysteinyl-tRNA(Sec) biosynthesis; L-seryl-tRNA(Sec) from L-serine and tRNA(Sec): step 1/1. Functionally, catalyzes the attachment of serine to tRNA(Ser). Is also able to aminoacylate tRNA(Sec) with serine, to form the misacylated tRNA L-seryl-tRNA(Sec), which will be further converted into selenocysteinyl-tRNA(Sec). The polypeptide is Serine--tRNA ligase (Bordetella petrii (strain ATCC BAA-461 / DSM 12804 / CCUG 43448)).